The chain runs to 1004 residues: Glutamate [NMDA] receptor subunit 1 (1004 aa).

Positions M1 to A39 are cleaved as a signal peptide. The Extracellular portion of the chain corresponds to Q40–S585. N270, N326, N357, N409, N466, N493, and N513 each carry an N-linked (GlcNAc...) asparagine glycan. Glycine-binding positions include P542 to T544 and R549. The helical transmembrane segment at N586–L606 threads the bilayer. Over D607–W663 the chain is Cytoplasmic. The chain crosses the membrane as a helical span at residues A664–L684. Over E685–N843 the chain is Extracellular. A glycan (N-linked (GlcNAc...) asparagine) is linked at N705. Residues S715 and D759 each contribute to the glycine site. The chain crosses the membrane as a helical span at residues M844–I864. The Cytoplasmic segment spans residues E865–V1004. The interval T980 to V1004 is disordered. The segment covering G994–V1004 has biased composition (polar residues).

This sequence belongs to the glutamate-gated ion channel (TC 1.A.10.1) family. In terms of assembly, forms a heteromeric NMDA channel with Nmdar2.

Its subcellular location is the cell membrane. It is found in the postsynaptic cell membrane. The protein localises to the postsynaptic density. NMDA receptor subtype of glutamate-gated ion channels with high calcium permeability and voltage-dependent sensitivity to magnesium. Mediated by glycine. This protein plays a key role in synaptic plasticity, synaptogenesis, excitotoxicity, memory acquisition and learning. It mediates neuronal functions in glutamate neurotransmission. Is involved in the cell surface targeting of NMDA receptors. Plays a role in associative learning and in long-term memory consolidation. This chain is Glutamate [NMDA] receptor subunit 1, found in Drosophila persimilis (Fruit fly).